A 398-amino-acid chain; its full sequence is Phosphoglycerate kinase (398 aa).

Substrate-binding positions include 23–25, Arg38, 61–64, Arg122, and Arg155; these read DFN and HMGK. ATP contacts are provided by residues Lys206, Gly297, Glu328, and 354-357; that span reads GGDS.

Belongs to the phosphoglycerate kinase family. In terms of assembly, monomer.

It is found in the cytoplasm. It catalyses the reaction (2R)-3-phosphoglycerate + ATP = (2R)-3-phospho-glyceroyl phosphate + ADP. Its pathway is carbohydrate degradation; glycolysis; pyruvate from D-glyceraldehyde 3-phosphate: step 2/5. The polypeptide is Phosphoglycerate kinase (Clostridium botulinum (strain Hall / ATCC 3502 / NCTC 13319 / Type A)).